A 951-amino-acid chain; its full sequence is MADLSLLQEDLPEDADGLGVDDYSSESDVIIIPSALDFVSQDEMLTPLGRLDKYAASENVFNRQMVARSLLDTLREVCGEERDCIAVLERISRLADDSEPTVRAELMEQVPHIALFCQENRPSIPYAFSKYLLPIVVRYLADQNNQVRKTSQAALLALLEQELIERLDVETKVCPVLIDLTAPDSNDDVKTEAVAIMCKMAPMVGKDITERLILPRFCEMCCDCRMFHVRKVCAANFGDICSVVGQQATEEMLLPRFFQLCSDNVWGVRKACAECFMAVSCATCQEIRRTKLSALFINLISDPSRWVRQAAFQSLGPFISTFANPSSSGQCFKDESKSSEDKDRIRDDGVVQEEQSRPEDAPSDLSAPHSSARLDGTLEGCAAETPGDSAGDMRVPADSSLLCTLSSESPQEAASDAESGKKHDNNSKSASRPDVGTSSPEPTPLDQEMFNSFHFWRTPLPQIDLDKELQQDPGERPSPERTGDAPAAPVPGSPSITMATRKELEEMIENLEPHMDDPDVKAQVEVLSAALRASTLDAHDEAGGAEQRSELQDDAVGAGGELPNCSISEDTSEPLVIAAEENMEATPDYIHGGADVGPGGGGGFSPDEERRPKVQDVVPQALLDQYLSMTDPSRAQTVDTEIAKHCAYSLPGVALTLGRQNWHCLRETYETLASDMQWKVRRTLAFSIHELAVILGDQLTAADLVPIFNGFLKDLDEVRIGVLKHLHDFLKLLHIDKRREYLYQLQEFLVTDNSRNWRFRAELAEQLILLLELYSPRDVYDYLRPIALNLCADKVSSVRWISYKLVSEMVKKLHMATPPTFGVELINELVENFGRCPKWSGRQAFVFVCQTVIEDDCLPMDQFAVHLMPHLLTLANDRVPNVRVLLAKTLRQTLLEKEYFLASASCHQEAVEQTIMALQMDRDSDVKYFASIHPSSTKLSEDAMSTASSTY.

7 HEAT repeats span residues 26 to 63, 82 to 119, 127 to 164, 168 to 206, 208 to 246, 248 to 285, and 287 to 324; these read ESDVIIIPSALDFVSQDEMLTPLGRLDKYAASENVFNR, RDCIAVLERISRLADDSEPTVRAELMEQVPHIALFCQE, AFSKYLLPIVVRYLADQNNQVRKTSQAALLALLEQELI, DVETKVCPVLIDLTAPDSNDDVKTEAVAIMCKMAPMVGK, ITERLILPRFCEMCCDCRMFHVRKVCAANFGDICSVVGQ, ATEEMLLPRFFQLCSDNVWGVRKACAECFMAVSCATCQ, and IRRTKLSALFINLISDPSRWVRQAAFQSLGPFISTFAN. Disordered stretches follow at residues 326–395, 407–501, 539–569, and 592–612; these read SSSG…DMRV, SESP…MATR, HDEAGGAEQRSELQDDAVGAGGELPNCSISE, and GGADVGPGGGGGFSPDEERRP. Basic and acidic residues-rich tracts occupy residues 332 to 360, 464 to 483, and 539 to 551; these read FKDESKSSEDKDRIRDDGVVQEEQSRPED, DLDKELQQDPGERPSPERTG, and HDEAGGAEQRSEL. The stretch at 502–539 is one HEAT 8 repeat; the sequence is KELEEMIENLEPHMDDPDVKAQVEVLSAALRASTLDAH. A compositionally biased stretch (gly residues) spans 594-604; sequence ADVGPGGGGGF. 4 HEAT repeats span residues 699–735, 777–815, 820–858, and 862–899; these read LTAADLVPIFNGFLKDLDEVRIGVLKHLHDFLKLLHI, RDVYDYLRPIALNLCADKVSSVRWISYKLVSEMVKKLHM, TFGVELINELVENFGRCPKWSGRQAFVFVCQTVIEDDCL, and QFAVHLMPHLLTLANDRVPNVRVLLAKTLRQTLLEKEY. Ser936 is subject to Phosphoserine.

As to quaternary structure, serine/threonine-protein phosphatase 4 (PP4) occurs in different assemblies of the catalytic and one or more regulatory subunits. Component of the PP4 complex PPP4C-PPP4R1. Interacts with HDAC3.

In terms of biological role, regulatory subunit of serine/threonine-protein phosphatase 4. May play a role in regulation of cell division in renal glomeruli. The PPP4C-PPP4R1 PP4 complex may play a role in dephosphorylation and regulation of HDAC3. Plays a role in the inhibition of TNF-induced NF-kappa-B activation by regulating the dephosphorylation of TRAF2. In Rattus norvegicus (Rat), this protein is Serine/threonine-protein phosphatase 4 regulatory subunit 1 (Ppp4r1).